A 146-amino-acid polypeptide reads, in one-letter code: Hemoglobin subunit delta (146 aa).

The region spanning 2–146 (HLTGEEKSAV…VATALAHKYH (145 aa)) is the Globin domain. Residue Ser50 is modified to Phosphoserine. 2 residues coordinate heme b: His63 and His92.

Belongs to the globin family. As to quaternary structure, heterotetramer of two delta chains and two alpha chains. As to expression, red blood cells.

In Leontocebus nigricollis (Black-mantled tamarin), this protein is Hemoglobin subunit delta (HBD).